A 345-amino-acid polypeptide reads, in one-letter code: Dihydroorotase (345 aa).

Residues histidine 13 and histidine 15 each contribute to the Zn(2+) site. Substrate contacts are provided by residues histidine 15–arginine 17 and asparagine 41. Lysine 99, histidine 136, and histidine 174 together coordinate Zn(2+). N6-carboxylysine is present on lysine 99. Histidine 136 contributes to the substrate binding site. Substrate is bound at residue leucine 219. Residue aspartate 247 participates in Zn(2+) binding. Aspartate 247 is a catalytic residue. Substrate contacts are provided by histidine 251 and alanine 263.

Belongs to the metallo-dependent hydrolases superfamily. DHOase family. Class II DHOase subfamily. As to quaternary structure, homodimer. Zn(2+) is required as a cofactor.

The enzyme catalyses (S)-dihydroorotate + H2O = N-carbamoyl-L-aspartate + H(+). It functions in the pathway pyrimidine metabolism; UMP biosynthesis via de novo pathway; (S)-dihydroorotate from bicarbonate: step 3/3. Catalyzes the reversible cyclization of carbamoyl aspartate to dihydroorotate. In Agrobacterium fabrum (strain C58 / ATCC 33970) (Agrobacterium tumefaciens (strain C58)), this protein is Dihydroorotase.